Consider the following 126-residue polypeptide: Histone H2B (126 aa).

Residues 1-12 show a composition bias toward low complexity; it reads MPEPAKSAPAAK. Residues 1-35 form a disordered region; that stretch reads MPEPAKSAPAAKKGSKKAVSKVQKKDGKKRRKSRK. 2 positions are modified to N6-acetyllysine: Lys-6 and Lys-13. Ser-15 is subject to Phosphoserine. N6-acetyllysine occurs at positions 16 and 21. A glycan (O-linked (GlcNAc) serine) is linked at Ser-113. Lys-121 participates in a covalent cross-link: Glycyl lysine isopeptide (Lys-Gly) (interchain with G-Cter in ubiquitin).

The protein belongs to the histone H2B family. As to quaternary structure, the nucleosome is a histone octamer containing two molecules each of H2A, H2B, H3 and H4 assembled in one H3-H4 heterotetramer and two H2A-H2B heterodimers. The octamer wraps approximately 147 bp of DNA. In terms of processing, monoubiquitination of Lys-121 by BRE1 gives a specific tag for epigenetic transcriptional activation and is also prerequisite for histone H3 'Lys-4' and 'Lys-79' methylation. Post-translationally, phosphorylated on Ser-15 during apoptosis; which facilitates apoptotic chromatin condensation. GlcNAcylation at Ser-113 promotes monoubiquitination of Lys-121. It fluctuates in response to extracellular glucose, and associates with transcribed genes. In terms of tissue distribution, expressed by the skin granular glands.

It localises to the nucleus. The protein localises to the secreted. Its subcellular location is the chromosome. In terms of biological role, core component of nucleosome. Nucleosomes wrap and compact DNA into chromatin, limiting DNA accessibility to the cellular machineries which require DNA as a template. Histones thereby play a central role in transcription regulation, DNA repair, DNA replication and chromosomal stability. DNA accessibility is regulated via a complex set of post-translational modifications of histones, also called histone code, and nucleosome remodeling. Functionally, has antibacterial activity against the Gram-negative bacteria E.coli and the Gram-positive bacteria S.aureus. In Zhangixalus schlegelii (Japanese gliding frog), this protein is Histone H2B.